Here is a 93-residue protein sequence, read N- to C-terminus: Large ribosomal subunit protein bL27 (93 aa).

The propeptide occupies Met1 to Phe8. The disordered stretch occupies residues Phe8–Gly29.

Belongs to the bacterial ribosomal protein bL27 family. Post-translationally, the N-terminus is cleaved by ribosomal processing cysteine protease Prp.

This is Large ribosomal subunit protein bL27 from Limosilactobacillus fermentum (strain NBRC 3956 / LMG 18251) (Lactobacillus fermentum).